Here is a 192-residue protein sequence, read N- to C-terminus: Imidazole glycerol phosphate synthase subunit HisH (192 aa).

One can recognise a Glutamine amidotransferase type-1 domain in the interval 1–192; that stretch reads MIAIIDYGLG…QALKGGFIND (192 aa). Cys77 functions as the Nucleophile in the catalytic mechanism. Active-site residues include His169 and Glu171.

Heterodimer of HisH and HisF.

It localises to the cytoplasm. The catalysed reaction is 5-[(5-phospho-1-deoxy-D-ribulos-1-ylimino)methylamino]-1-(5-phospho-beta-D-ribosyl)imidazole-4-carboxamide + L-glutamine = D-erythro-1-(imidazol-4-yl)glycerol 3-phosphate + 5-amino-1-(5-phospho-beta-D-ribosyl)imidazole-4-carboxamide + L-glutamate + H(+). It carries out the reaction L-glutamine + H2O = L-glutamate + NH4(+). The protein operates within amino-acid biosynthesis; L-histidine biosynthesis; L-histidine from 5-phospho-alpha-D-ribose 1-diphosphate: step 5/9. In terms of biological role, IGPS catalyzes the conversion of PRFAR and glutamine to IGP, AICAR and glutamate. The HisH subunit catalyzes the hydrolysis of glutamine to glutamate and ammonia as part of the synthesis of IGP and AICAR. The resulting ammonia molecule is channeled to the active site of HisF. In Staphylococcus epidermidis (strain ATCC 35984 / DSM 28319 / BCRC 17069 / CCUG 31568 / BM 3577 / RP62A), this protein is Imidazole glycerol phosphate synthase subunit HisH.